Consider the following 76-residue polypeptide: Acyl carrier protein (76 aa).

One can recognise a Carrier domain in the interval 1–76 (MSLEEKVKNI…DVIEYIKAHT (76 aa)). S36 carries the O-(pantetheine 4'-phosphoryl)serine modification.

It belongs to the acyl carrier protein (ACP) family. Post-translationally, 4'-phosphopantetheine is transferred from CoA to a specific serine of apo-ACP by AcpS. This modification is essential for activity because fatty acids are bound in thioester linkage to the sulfhydryl of the prosthetic group.

It is found in the cytoplasm. It functions in the pathway lipid metabolism; fatty acid biosynthesis. Functionally, carrier of the growing fatty acid chain in fatty acid biosynthesis. The protein is Acyl carrier protein of Desulfatibacillum aliphaticivorans.